We begin with the raw amino-acid sequence, 425 residues long: Enolase (425 aa).

Residue Gln-161 coordinates (2R)-2-phosphoglycerate. The active-site Proton donor is the Glu-203. Mg(2+) contacts are provided by Asp-240, Glu-283, and Asp-310. Residues Lys-335, Arg-364, Ser-365, and Lys-386 each contribute to the (2R)-2-phosphoglycerate site. Catalysis depends on Lys-335, which acts as the Proton acceptor.

Belongs to the enolase family. As to quaternary structure, component of the RNA degradosome, a multiprotein complex involved in RNA processing and mRNA degradation. It depends on Mg(2+) as a cofactor.

The protein resides in the cytoplasm. It is found in the secreted. Its subcellular location is the cell surface. It carries out the reaction (2R)-2-phosphoglycerate = phosphoenolpyruvate + H2O. It functions in the pathway carbohydrate degradation; glycolysis; pyruvate from D-glyceraldehyde 3-phosphate: step 4/5. Catalyzes the reversible conversion of 2-phosphoglycerate (2-PG) into phosphoenolpyruvate (PEP). It is essential for the degradation of carbohydrates via glycolysis. This chain is Enolase, found in Ruthia magnifica subsp. Calyptogena magnifica.